A 160-amino-acid polypeptide reads, in one-letter code: Peripheral myelin protein 22 (160 aa).

Met-1 is a topological domain (cytoplasmic). A helical membrane pass occupies residues 2 to 31; that stretch reads LLLLLSIIVLHVAVLVLLFVSTIVSQWIVG. Topologically, residues 32-64 are extracellular; it reads NGHATDLWQNCSTSSSGNVHHCFSSSPNEWLQS. An N-linked (GlcNAc...) asparagine glycan is attached at Asn-41. Residues 65–91 form a helical membrane-spanning segment; sequence VQATMILSIIFSILSLFLFFCQLFTLT. Residues 92-95 are Cytoplasmic-facing; it reads KGGR. A helical membrane pass occupies residues 96 to 119; that stretch reads FYITGIFQILAGLCVMSAAAIYTV. The Extracellular segment spans residues 120-133; it reads RHPEWHLNSDYSYG. A helical transmembrane segment spans residues 134–156; the sequence is FAYILAWVAFPLALLSGVIYVIL. Residues 157-160 lie on the Cytoplasmic side of the membrane; the sequence is RKRE.

The protein belongs to the PMP-22/EMP/MP20 family. In terms of processing, ubiquitinated by the DCX(DCAF13) E3 ubiquitin ligase complex, leading to its degradation.

It localises to the cell membrane. In terms of biological role, might be involved in growth regulation, and in myelinization in the peripheral nervous system. This Homo sapiens (Human) protein is Peripheral myelin protein 22 (PMP22).